The primary structure comprises 357 residues: UPF0283 membrane protein HS_0596 (357 aa).

The next 3 membrane-spanning stretches (helical) occupy residues 67–87 (LMAT…QWLV), 96–116 (IAFV…GAII), and 213–233 (AVES…MFFI).

The protein belongs to the UPF0283 family.

It is found in the cell inner membrane. The sequence is that of UPF0283 membrane protein HS_0596 from Histophilus somni (strain 129Pt) (Haemophilus somnus).